The chain runs to 341 residues: Krueppel-like factor 17 (341 aa).

The tract at residues 214 to 252 is disordered; the sequence is VTESNTQEEPFVREPPTPAPEGAESPSTSRGATRRQSPV. The segment covering 238 to 252 has biased composition (polar residues); that stretch reads SPSTSRGATRRQSPV. 3 C2H2-type zinc fingers span residues 256–280, 286–310, and 316–338; these read YVCT…QRKH, FACD…KRIH, and HKCD…KRTH.

It belongs to the Sp1 C2H2-type zinc-finger protein family. Exclusively expressed in testis and ovary. Localized to step 3-8 spermatids in testis and growing oocytes in ovary.

Its subcellular location is the nucleus. Functionally, transcription repressor that binds to the promoter of target genes and prevents their expression. Acts as a negative regulator of epithelial-mesenchymal transition and metastasis in breast cancer. Specifically binds the 5'-CACCC-3' sequence in the promoter of ID1, a key metastasis regulator in breast cancer, and repress its expression. May be a germ cell-specific transcription factor that plays important roles in spermatid differentiation and oocyte development. The sequence is that of Krueppel-like factor 17 (Klf17) from Mus musculus (Mouse).